The following is a 155-amino-acid chain: MRKLVGGKLHGIRVTESNLEYHGSITLDPAHCEAAGILPLEFVEIWNKNSGARITTYVILGQRGSRCCVLNGAAARTCQPGDELIICSSVYLDGAEITNLSPAVLTFDANNNIVERLHYSVTRDGAGHYQFGIVAEDGEILQPPLKSGMRQKRAS.

Residue serine 24 is the Schiff-base intermediate with substrate; via pyruvic acid of the active site. At serine 24 the chain carries Pyruvic acid (Ser). Threonine 56 contributes to the substrate binding site. The active-site Proton donor is tyrosine 57. Residue 72-74 (GAA) coordinates substrate.

It belongs to the PanD family. Heterooctamer of four alpha and four beta subunits. It depends on pyruvate as a cofactor. In terms of processing, is synthesized initially as an inactive proenzyme, which is activated by self-cleavage at a specific serine bond to produce a beta-subunit with a hydroxyl group at its C-terminus and an alpha-subunit with a pyruvoyl group at its N-terminus.

It is found in the cytoplasm. It catalyses the reaction L-aspartate + H(+) = beta-alanine + CO2. Its pathway is cofactor biosynthesis; (R)-pantothenate biosynthesis; beta-alanine from L-aspartate: step 1/1. In terms of biological role, catalyzes the pyruvoyl-dependent decarboxylation of aspartate to produce beta-alanine. This is Aspartate 1-decarboxylase from Methylocella silvestris (strain DSM 15510 / CIP 108128 / LMG 27833 / NCIMB 13906 / BL2).